Reading from the N-terminus, the 447-residue chain is UPF0210 protein Ldb1026 (447 aa).

The protein belongs to the UPF0210 family. Homodimer.

In Lactobacillus delbrueckii subsp. bulgaricus (strain ATCC 11842 / DSM 20081 / BCRC 10696 / JCM 1002 / NBRC 13953 / NCIMB 11778 / NCTC 12712 / WDCM 00102 / Lb 14), this protein is UPF0210 protein Ldb1026.